Here is a 131-residue protein sequence, read N- to C-terminus: UPF0292 protein PF1724 (131 aa).

One can recognise a Toprim domain in the interval 20 to 103 (KGVIIVEGKR…ETRRELQFIA (84 aa)). Positions 26, 69, and 71 each coordinate Mg(2+).

The protein belongs to the UPF0292 family. Mg(2+) is required as a cofactor.

The protein is UPF0292 protein PF1724 of Pyrococcus furiosus (strain ATCC 43587 / DSM 3638 / JCM 8422 / Vc1).